A 328-amino-acid chain; its full sequence is Flotillin-like protein FloA (328 aa).

A run of 2 helical transmembrane segments spans residues 9 to 29 (LLIT…VPVG) and 30 to 50 (LWIS…IGMR).

It belongs to the flotillin-like FloA family. Homooligomerizes.

It is found in the cell membrane. It localises to the membrane raft. Its function is as follows. Found in functional membrane microdomains (FMM) that may be equivalent to eukaryotic membrane rafts. FMMs are highly dynamic and increase in number as cells age. Flotillins are thought to be important factors in membrane fluidity. The polypeptide is Flotillin-like protein FloA (Exiguobacterium sp. (strain ATCC BAA-1283 / AT1b)).